Consider the following 806-residue polypeptide: Sperm head and tail associated protein (806 aa).

4 disordered regions span residues 1-36, 257-329, 428-496, and 707-806; these read MNSS…PSSC, TPAS…MSGS, LNNQ…CPQP, and SQIN…SKKK. Positions 13–27 are enriched in polar residues; it reads APSTSPQADCPNNYS. The segment covering 277–290 has biased composition (low complexity); that stretch reads PPLSSASSPPSGNP. A compositionally biased stretch (polar residues) spans 320-329; that stretch reads LSSQAGMSGS. The interaction with CRISP2 stretch occupies residues 521–806; it reads KEPPPETAVL…QIKSPHSKKK (286 aa). 2 stretches are compositionally biased toward low complexity: residues 710 to 723 and 733 to 754; these read NHQN…KNSS and RRGA…SSTQ. The span at 773-788 shows a compositional bias: polar residues; sequence QSQSPADGKIESQSKS.

In terms of assembly, interacts with CRISP2. In terms of tissue distribution, isoforms 3 and 4 are expressed in testis (at protein level).

The protein resides in the cytoplasm. Its function is as follows. Plays a role during spermatogenesis. The protein is Sperm head and tail associated protein (Nsun4) of Mus musculus (Mouse).